A 394-amino-acid polypeptide reads, in one-letter code: Chalcone synthase (394 aa).

The active site involves Cys-168.

This sequence belongs to the thiolase-like superfamily. Chalcone/stilbene synthases family.

The catalysed reaction is (E)-4-coumaroyl-CoA + 3 malonyl-CoA + 3 H(+) = 2',4,4',6'-tetrahydroxychalcone + 3 CO2 + 4 CoA. It functions in the pathway secondary metabolite biosynthesis; flavonoid biosynthesis. Its function is as follows. The primary product of this enzyme is 4,2',4',6'-tetrahydroxychalcone (also termed naringenin-chalcone or chalcone) which can under specific conditions spontaneously isomerize into naringenin. In Raphanus sativus (Radish), this protein is Chalcone synthase (CHS).